The following is a 96-amino-acid chain: Co-chaperonin GroES (96 aa).

It belongs to the GroES chaperonin family. As to quaternary structure, heptamer of 7 subunits arranged in a ring. Interacts with the chaperonin GroEL.

It localises to the cytoplasm. In terms of biological role, together with the chaperonin GroEL, plays an essential role in assisting protein folding. The GroEL-GroES system forms a nano-cage that allows encapsulation of the non-native substrate proteins and provides a physical environment optimized to promote and accelerate protein folding. GroES binds to the apical surface of the GroEL ring, thereby capping the opening of the GroEL channel. This Delftia acidovorans (strain DSM 14801 / SPH-1) protein is Co-chaperonin GroES.